Consider the following 1056-residue polypeptide: ATP-dependent helicase wrn-1 (1056 aa).

Positions 1–102 (MISDDDDLPS…SSSDDSDQGD (102 aa)) are disordered. 2 repeat units span residues 17–26 (NEELPETEPE) and 28–37 (NDELPETEPE). Residues 17–37 (NEELPETEPEDNDELPETEPE) are 2 X 10 AA repeats of N-[ED]-E-L-P-E-T-E-P-E. A compositionally biased stretch (acidic residues) spans 19 to 38 (ELPETEPEDNDELPETEPES). Residues 43–53 (PTVTSNKTENQ) are compositionally biased toward polar residues. The span at 54 to 63 (VADEDYDSFD) shows a compositional bias: acidic residues. A Helicase ATP-binding domain is found at 236–406 (VRNVLGGKDQ…IANLRLRKPL (171 aa)). 249–256 (MSTGYGKS) provides a ligand contact to ATP. The short motif at 348–351 (DEAH) is the DEAH box element. Positions 427–583 (MAEDLGLFMK…NLTMMLRQLE (157 aa)) constitute a Helicase C-terminal domain. Zn(2+)-binding residues include Cys-591, Cys-614, Cys-615, and Cys-618. Residues 749–771 (KEKAAPSTVPGASRSQSTKSSTE) are disordered. The span at 761–771 (SRSQSTKSSTE) shows a compositional bias: polar residues. An HRDC domain is found at 806-886 (PEKIDQLRSR…VQFSKETGIA (81 aa)). The segment at 1018–1056 (QEKPDIQSMPSTSNPSTIKTVPSTPSSSLRAPPLKKFKL) is disordered. The segment covering 1025 to 1046 (SMPSTSNPSTIKTVPSTPSSSL) has biased composition (polar residues).

This sequence belongs to the helicase family. RecQ subfamily. The cofactor is Zn(2+).

It localises to the nucleus. The enzyme catalyses Couples ATP hydrolysis with the unwinding of duplex DNA by translocating in the 3'-5' direction.. It catalyses the reaction ATP + H2O = ADP + phosphate + H(+). Essential for the formation of DNA replication focal centers; stably associates with foci elements generating binding sites for RP-A. Exhibits a magnesium-dependent ATP-dependent 3'-5' DNA-helicase activity. May be involved in the control of genomic stability. This chain is ATP-dependent helicase wrn-1 (wrn-1), found in Caenorhabditis elegans.